A 346-amino-acid polypeptide reads, in one-letter code: Fe(3+) ions import ATP-binding protein FbpC 3 (346 aa).

An ABC transporter domain is found at leucine 5 to isoleucine 235. Position 37–44 (glycine 37–threonine 44) interacts with ATP.

This sequence belongs to the ABC transporter superfamily. Fe(3+) ion importer (TC 3.A.1.10) family. As to quaternary structure, the complex is composed of two ATP-binding proteins (FbpC), two transmembrane proteins (FbpB) and a solute-binding protein (FbpA).

It is found in the cell membrane. The enzyme catalyses Fe(3+)(out) + ATP + H2O = Fe(3+)(in) + ADP + phosphate + H(+). Its function is as follows. Part of the ABC transporter complex FbpABC involved in Fe(3+) ions import. Responsible for energy coupling to the transport system. The polypeptide is Fe(3+) ions import ATP-binding protein FbpC 3 (Rhodococcus jostii (strain RHA1)).